A 2380-amino-acid polypeptide reads, in one-letter code: DNA polymerase epsilon catalytic subunit A (2380 aa).

Residues 169–196 (YYNKGNNNNNNHQNYNNNNNQNNNNFNK) show a composition bias toward low complexity. 5 disordered regions span residues 169-209 (YYNK…NNSK), 1178-1210 (FFEKTEDNDQDNDNDNDNDNDNDNDNSKPQQTD), 1766-1787 (KNTSNNSNTKNGANQNTTNDTT), 1967-1998 (QQQQQQQDNADDDDDDDVSENEEEQQQNKNKK), and 2059-2120 (KIST…TTTS). Positions 1183–1201 (EDNDQDNDNDNDNDNDNDN) are enriched in acidic residues. Low complexity predominate over residues 1767–1776 (NTSNNSNTKN). Residues 1777-1787 (GANQNTTNDTT) are compositionally biased toward polar residues. A compositionally biased stretch (acidic residues) spans 1975 to 1991 (NADDDDDDDVSENEEEQ). Composition is skewed to low complexity over residues 2059–2081 (KISTTSSSSNNDSTAATTTTTKD) and 2110–2120 (SSSSSTTTTTS). Cys2225 and Cys2228 together coordinate Zn(2+). The CysA-type zinc-finger motif lies at 2225-2288 (CSSCHSCRDI…RVPELSCIQC (64 aa)). Positions 2245–2258 (ISSRLSSQQKSNNN) are enriched in low complexity. The tract at residues 2245–2275 (ISSRLSSQQKSNNNDSDDSDDDNEENEGDDD) is disordered. The segment covering 2259-2275 (DSDDSDDDNEENEGDDD) has biased composition (acidic residues). Zn(2+) contacts are provided by Cys2285 and Cys2288. Residues Cys2319, Cys2322, Cys2334, and Cys2337 each contribute to the [4Fe-4S] cluster site. A CysB motif motif is present at residues 2319 to 2337 (CSKCNDVKSDNLGDICPQC).

This sequence belongs to the DNA polymerase type-B family. Consists of three subunits: pole, pole2 and pole3. [4Fe-4S] cluster is required as a cofactor.

It is found in the nucleus. The catalysed reaction is DNA(n) + a 2'-deoxyribonucleoside 5'-triphosphate = DNA(n+1) + diphosphate. In terms of biological role, DNA polymerase II participates in chromosomal DNA replication. This is DNA polymerase epsilon catalytic subunit A (pole) from Dictyostelium discoideum (Social amoeba).